A 209-amino-acid chain; its full sequence is MKKAILGKKLGMTQIFNENGKVIPVTVIEAGPCTVIQKKTVEKDGYEAIQVAFGDIREKLRNKPVKGHFAKAGVSVKRHIKEFKLEDSNSLEIGQEIKADVFEAGERVDISGVSKGKGFQGTIRRWNAHRGPMTHGSKFHRAVGSMGASSDPSRTFKNKRMPGHMGNVNTTVLNLEVVRIIPEKNLILIKGGVPGPNKGLVQIRNTVKA.

Residues 128–163 (AHRGPMTHGSKFHRAVGSMGASSDPSRTFKNKRMPG) are disordered.

The protein belongs to the universal ribosomal protein uL3 family. As to quaternary structure, part of the 50S ribosomal subunit. Forms a cluster with proteins L14 and L19.

Functionally, one of the primary rRNA binding proteins, it binds directly near the 3'-end of the 23S rRNA, where it nucleates assembly of the 50S subunit. This Clostridium botulinum (strain 657 / Type Ba4) protein is Large ribosomal subunit protein uL3.